A 294-amino-acid polypeptide reads, in one-letter code: 4-hydroxy-tetrahydrodipicolinate synthase (294 aa).

A pyruvate-binding site is contributed by T45. The active-site Proton donor/acceptor is Y133. K162 acts as the Schiff-base intermediate with substrate in catalysis. V204 serves as a coordination point for pyruvate.

It belongs to the DapA family. In terms of assembly, homotetramer; dimer of dimers.

It localises to the cytoplasm. It catalyses the reaction L-aspartate 4-semialdehyde + pyruvate = (2S,4S)-4-hydroxy-2,3,4,5-tetrahydrodipicolinate + H2O + H(+). It functions in the pathway amino-acid biosynthesis; L-lysine biosynthesis via DAP pathway; (S)-tetrahydrodipicolinate from L-aspartate: step 3/4. Functionally, catalyzes the condensation of (S)-aspartate-beta-semialdehyde [(S)-ASA] and pyruvate to 4-hydroxy-tetrahydrodipicolinate (HTPA). The chain is 4-hydroxy-tetrahydrodipicolinate synthase from Bartonella bacilliformis (strain ATCC 35685 / KC583 / Herrer 020/F12,63).